Consider the following 204-residue polypeptide: MRGTLYIVSASSGTGKSSIVNATLERDQQIALSISFTSRQPRPNERHAQHYYFVSADEFQRMIEAGDFFEYALVHGDWKGTARQSVEPQLAAGHDVLLEIDWQGARQVRSKIPDAISIFILPPSRAALEERLRKRGQDSEEVIHLRLAAAHEEMAHYDEFDYTIINEHFETAVSEMSAIFTASRLRRQTQKIRHANLIQTLLTP.

The Guanylate kinase-like domain maps to 3-181; that stretch reads GTLYIVSASS…AVSEMSAIFT (179 aa). Residue 10–17 coordinates ATP; sequence ASSGTGKS.

Belongs to the guanylate kinase family.

The protein resides in the cytoplasm. It carries out the reaction GMP + ATP = GDP + ADP. Its function is as follows. Essential for recycling GMP and indirectly, cGMP. This Xylella fastidiosa (strain Temecula1 / ATCC 700964) protein is Guanylate kinase.